Here is a 203-residue protein sequence, read N- to C-terminus: Putative 3-methyladenine DNA glycosylase (203 aa).

Belongs to the DNA glycosylase MPG family.

This Desulfitobacterium hafniense (strain Y51) protein is Putative 3-methyladenine DNA glycosylase.